A 413-amino-acid chain; its full sequence is Multifunctional CCA protein (413 aa).

Residues Gly-8 and Arg-11 each contribute to the ATP site. CTP contacts are provided by Gly-8 and Arg-11. 2 residues coordinate Mg(2+): Asp-21 and Asp-23. ATP contacts are provided by Arg-91, Arg-143, and Arg-146. CTP-binding residues include Arg-91, Arg-143, and Arg-146. The HD domain occupies 232 to 333; that stretch reads TGVHVMMVVD…VRLFERSDAL (102 aa).

Belongs to the tRNA nucleotidyltransferase/poly(A) polymerase family. Bacterial CCA-adding enzyme type 1 subfamily. As to quaternary structure, monomer. Can also form homodimers and oligomers. Requires Mg(2+) as cofactor. Ni(2+) serves as cofactor.

It catalyses the reaction a tRNA precursor + 2 CTP + ATP = a tRNA with a 3' CCA end + 3 diphosphate. The enzyme catalyses a tRNA with a 3' CCA end + 2 CTP + ATP = a tRNA with a 3' CCACCA end + 3 diphosphate. Catalyzes the addition and repair of the essential 3'-terminal CCA sequence in tRNAs without using a nucleic acid template. Adds these three nucleotides in the order of C, C, and A to the tRNA nucleotide-73, using CTP and ATP as substrates and producing inorganic pyrophosphate. tRNA 3'-terminal CCA addition is required both for tRNA processing and repair. Also involved in tRNA surveillance by mediating tandem CCA addition to generate a CCACCA at the 3' terminus of unstable tRNAs. While stable tRNAs receive only 3'-terminal CCA, unstable tRNAs are marked with CCACCA and rapidly degraded. The protein is Multifunctional CCA protein of Burkholderia cenocepacia (strain ATCC BAA-245 / DSM 16553 / LMG 16656 / NCTC 13227 / J2315 / CF5610) (Burkholderia cepacia (strain J2315)).